Consider the following 1040-residue polypeptide: Putative protein tag-76 (1040 aa).

Residues 1–15 (MSRRNATSFVDNNTL) are compositionally biased toward polar residues. Disordered regions lie at residues 1–61 (MSRR…GSVS) and 322–367 (RTSK…PGAN). The span at 16 to 32 (TSSGISGSGSMSPPITS) shows a compositional bias: low complexity. The segment covering 33–50 (RPASGQASPLTSNGSLSP) has biased composition (polar residues). Gly residues predominate over residues 333-356 (GPGGPGGPGGYRGGRGGGRGGSYG). Positions 379 to 486 (FTMDTLSRDT…LPMEHCLIDS (108 aa)) constitute a PAZ domain. Residues 660–966 (CIIVVLQSKN…VATRARCHVK (307 aa)) form the Piwi domain.

The polypeptide is Putative protein tag-76 (tag-76) (Caenorhabditis elegans).